The primary structure comprises 199 residues: Recombination protein RecR (199 aa).

A C4-type zinc finger spans residues 58 to 73; the sequence is CSVCSNLTDIDPCPLC. Residues 81–176 form the Toprim domain; that stretch reads TVICVVQDPR…KATRIAHGIP (96 aa).

It belongs to the RecR family.

Its function is as follows. May play a role in DNA repair. It seems to be involved in an RecBC-independent recombinational process of DNA repair. It may act with RecF and RecO. This is Recombination protein RecR from Ruminiclostridium cellulolyticum (strain ATCC 35319 / DSM 5812 / JCM 6584 / H10) (Clostridium cellulolyticum).